We begin with the raw amino-acid sequence, 440 residues long: (S)-N-methylcoclaurine 3'-hydroxylase-like protein (440 aa).

Residues 2 to 21 traverse the membrane as a helical; Signal-anchor for type II membrane protein segment; sequence EIVTVALIAIVFTTFLYLIV. Cys-430 is a binding site for heme.

Belongs to the cytochrome P450 family. It depends on heme as a cofactor.

The protein resides in the membrane. In terms of biological role, involved in the biosynthesis of benzylisoquinoline alkaloids. Probably involved in papaverine biosynthesis since its transcripts are abundant only in cultivars with substantial papaverine accumulation. May catalyze the 3'-hydroxylation of (S)-coclaurine. The chain is (S)-N-methylcoclaurine 3'-hydroxylase-like protein from Papaver somniferum (Opium poppy).